The primary structure comprises 859 residues: DNA mismatch repair protein MutS (859 aa).

615–622 (GPNMGGKS) provides a ligand contact to ATP.

The protein belongs to the DNA mismatch repair MutS family.

Functionally, this protein is involved in the repair of mismatches in DNA. It is possible that it carries out the mismatch recognition step. This protein has a weak ATPase activity. The protein is DNA mismatch repair protein MutS of Chromohalobacter salexigens (strain ATCC BAA-138 / DSM 3043 / CIP 106854 / NCIMB 13768 / 1H11).